Consider the following 142-residue polypeptide: Galactose-6-phosphate isomerase subunit LacA (142 aa).

The protein belongs to the LacAB/RpiB family. As to quaternary structure, heteromultimeric protein consisting of LacA and LacB.

It catalyses the reaction aldehydo-D-galactose 6-phosphate = keto-D-tagatose 6-phosphate. The protein operates within carbohydrate metabolism; D-galactose 6-phosphate degradation; D-tagatose 6-phosphate from D-galactose 6-phosphate: step 1/1. The chain is Galactose-6-phosphate isomerase subunit LacA from Staphylococcus aureus.